The sequence spans 98 residues: NADH-ubiquinone oxidoreductase chain 4L (98 aa).

3 helical membrane passes run 2-22 (TPIF…TLIF), 29-49 (SLLC…LIIL), and 61-81 (ILLL…LVMV).

This sequence belongs to the complex I subunit 4L family. Core subunit of respiratory chain NADH dehydrogenase (Complex I) which is composed of 45 different subunits.

It is found in the mitochondrion inner membrane. The catalysed reaction is a ubiquinone + NADH + 5 H(+)(in) = a ubiquinol + NAD(+) + 4 H(+)(out). Its function is as follows. Core subunit of the mitochondrial membrane respiratory chain NADH dehydrogenase (Complex I) which catalyzes electron transfer from NADH through the respiratory chain, using ubiquinone as an electron acceptor. Part of the enzyme membrane arm which is embedded in the lipid bilayer and involved in proton translocation. The polypeptide is NADH-ubiquinone oxidoreductase chain 4L (MT-ND4L) (Avahi cleesei (Cleese's woolly lemur)).